Here is a 459-residue protein sequence, read N- to C-terminus: MQPATLQWSSYVLQLRLTTAAILKPGELRYFKCGLGICPPSSSVVCTCRDESSFAASPFTYIDPKDYGNIPFAVHNISDLDLDLGRLPIVLNIFALPYANVTVSNLPVQRIEAYDRHAIPHGQCEAQFILYGPLTRIKIYAADIRWTEKTPEEPTRYLFNADIWINLQNTPLDQIFNSAKIEFISHRHVSISRILLCGNLLILKTVYENDYLLDDTFFPEKLNIQLSLTPHTADITMSQNQETLLKCNVGSITVGATKNIVSNLITPFHCSFHTIFESNSNFTGFFIPKLLHGISITTCIWDETRPLYITMKAQKKNCRINYSQELGKVFFFPKQILPPGNNIEFSWTEMSNIYVNIESPNGPVKDIVALASQPVSRAPSLTTVAHVTPEISMGIFLKSLRIAFDKEHLVPLHFFLKPGESTRMEFMPPETPQSLTILEGDVGIRFIPCHNNYSHRSSP.

The N-terminal stretch at 1 to 20 (MQPATLQWSSYVLQLRLTTA) is a signal peptide. N-linked (GlcNAc...) asparagine; by host glycans are attached at residues Asn76, Asn100, Asn281, Asn321, and Asn452.

This sequence belongs to the herpesviridae UL82 family.

The chain is Protein U54 (U54) from Homo sapiens (Human).